The chain runs to 379 residues: Carbamoyl phosphate synthase small chain (379 aa).

Positions 1-189 (MSKSALLVLE…GLPEAKADSE (189 aa)) are CPSase. The L-glutamine site is built by Ser-47, Gly-241, and Gly-243. A Glutamine amidotransferase type-1 domain is found at 193-379 (HVVAYDFGAK…FIELIKQFRA (187 aa)). Catalysis depends on Cys-269, which acts as the Nucleophile. L-glutamine is bound by residues Leu-270, Gln-273, Asn-311, Gly-313, and Phe-314. Active-site residues include His-353 and Glu-355.

This sequence belongs to the CarA family. In terms of assembly, composed of two chains; the small (or glutamine) chain promotes the hydrolysis of glutamine to ammonia, which is used by the large (or ammonia) chain to synthesize carbamoyl phosphate. Tetramer of heterodimers (alpha,beta)4.

It carries out the reaction hydrogencarbonate + L-glutamine + 2 ATP + H2O = carbamoyl phosphate + L-glutamate + 2 ADP + phosphate + 2 H(+). It catalyses the reaction L-glutamine + H2O = L-glutamate + NH4(+). It participates in amino-acid biosynthesis; L-arginine biosynthesis; carbamoyl phosphate from bicarbonate: step 1/1. The protein operates within pyrimidine metabolism; UMP biosynthesis via de novo pathway; (S)-dihydroorotate from bicarbonate: step 1/3. In terms of biological role, small subunit of the glutamine-dependent carbamoyl phosphate synthetase (CPSase). CPSase catalyzes the formation of carbamoyl phosphate from the ammonia moiety of glutamine, carbonate, and phosphate donated by ATP, constituting the first step of 2 biosynthetic pathways, one leading to arginine and/or urea and the other to pyrimidine nucleotides. The small subunit (glutamine amidotransferase) binds and cleaves glutamine to supply the large subunit with the substrate ammonia. This is Carbamoyl phosphate synthase small chain from Vibrio cholerae serotype O1 (strain ATCC 39315 / El Tor Inaba N16961).